A 178-amino-acid chain; its full sequence is Mediator of RNA polymerase II transcription subunit 31 (178 aa).

Positions 129–140 are enriched in acidic residues; sequence EGQELEESEDEA. The tract at residues 129-178 is disordered; that stretch reads EGQELEESEDEADIRQKDTEDEDDEETMKKPDADTAEKNSTTSTVSKKEK. Over residues 155 to 165 the composition is skewed to basic and acidic residues; the sequence is TMKKPDADTAE. A compositionally biased stretch (polar residues) spans 166 to 178; that stretch reads KNSTTSTVSKKEK.

The protein belongs to the Mediator complex subunit 31 family. In terms of assembly, component of the Mediator complex.

It localises to the nucleus. Its function is as follows. Component of the Mediator complex, a coactivator involved in the regulated transcription of nearly all RNA polymerase II-dependent genes. Mediator functions as a bridge to convey information from gene-specific regulatory proteins to the basal RNA polymerase II transcription machinery. Mediator is recruited to promoters by direct interactions with regulatory proteins and serves as a scaffold for the assembly of a functional preinitiation complex with RNA polymerase II and the general transcription factors. The chain is Mediator of RNA polymerase II transcription subunit 31 from Caenorhabditis elegans.